The following is a 523-amino-acid chain: Polyamine aminopropyltransferase (523 aa).

The next 7 helical transmembrane spans lie at 20-40 (VLLA…LALL), 51-71 (IVAT…GALL), 88-108 (AVLG…FAFL), 116-136 (LVLA…VPLL), 164-184 (LGAL…LGMI), 186-206 (GAAV…IFLL), and 215-235 (LVTA…LLVH). Residues 203–478 (IFLLRHVVSG…APTPAVPSTA (276 aa)) are spermidine synthase. Positions 231 to 465 (TLLVHSHDIE…GDWGFALARL (235 aa)) constitute a PABS domain. S-methyl-5'-thioadenosine is bound at residue Q261. D313 provides a ligand contact to spermidine. Residues E333 and 365-366 (DA) each bind S-methyl-5'-thioadenosine. D386 acts as the Proton acceptor in catalysis.

It belongs to the spermidine/spermine synthase family. Homodimer or homotetramer.

It is found in the cell membrane. The enzyme catalyses S-adenosyl 3-(methylsulfanyl)propylamine + putrescine = S-methyl-5'-thioadenosine + spermidine + H(+). Its pathway is amine and polyamine biosynthesis; spermidine biosynthesis; spermidine from putrescine: step 1/1. Catalyzes the irreversible transfer of a propylamine group from the amino donor S-adenosylmethioninamine (decarboxy-AdoMet) to putrescine (1,4-diaminobutane) to yield spermidine. The protein is Polyamine aminopropyltransferase of Mycobacterium bovis (strain ATCC BAA-935 / AF2122/97).